Consider the following 362-residue polypeptide: 5'-tyrosyl-DNA phosphodiesterase (362 aa).

The span at 1-10 (MSNSDDEIQE) shows a compositional bias: acidic residues. A disordered region spans residues 1 to 43 (MSNSDDEIQEIEAKRQKMSQEDSEVEIEILDEPEQGKLKNSSM). The segment covering 11–20 (IEAKRQKMSQ) has biased composition (basic and acidic residues). The segment covering 21-33 (EDSEVEIEILDEP) has biased composition (acidic residues). The interval 126–130 (NIDGL) is interaction with 5' end of substrate DNA. Residues aspartate 128 and glutamate 158 each coordinate Mg(2+). Residues 232-237 (HLESTR) form an interaction with 5' end of substrate DNA region. Aspartate 271 acts as the Proton donor/acceptor in catalysis. Positions 273–275 (NLR) are interaction with 5' end of substrate DNA.

Belongs to the CCR4/nocturin family. TTRAP/TDP2 subfamily. As to quaternary structure, interacts with mxl-1; the interaction promotes axon regeneration after injury. Interacts with ets-4; the interaction is required for the sumoylation of ets-4. Mg(2+) serves as cofactor. Requires Mn(2+) as cofactor.

It is found in the nucleus. It localises to the PML body. DNA repair enzyme that can remove a variety of covalent adducts from DNA through hydrolysis of a 5'-phosphodiester bond, giving rise to DNA with a free 5' phosphate. Catalyzes the hydrolysis of dead-end complexes between DNA and the topoisomerase 2 (top2) active site tyrosine residue. Hydrolyzes 5'-phosphoglycolates on protruding 5' ends on DNA double-strand breaks (DSBs) due to DNA damage by radiation and free radicals. Inhibits axon regeneration after neuronal injury by promoting the sumoylation of ets-4, thereby inhibiting the phosphorylation of ets-4 required for probable interaction with cebp-1 and activation of svh-2 expression. The polypeptide is 5'-tyrosyl-DNA phosphodiesterase (Caenorhabditis elegans).